The sequence spans 282 residues: Acetyl-coenzyme A carboxylase carboxyl transferase subunit beta (282 aa).

The CoA carboxyltransferase N-terminal domain maps to Ile-23–Ala-282. Zn(2+)-binding residues include Cys-27, Cys-30, Cys-46, and Cys-49. Residues Cys-27 to Cys-49 form a C4-type zinc finger.

This sequence belongs to the AccD/PCCB family. Acetyl-CoA carboxylase is a heterohexamer composed of biotin carboxyl carrier protein (AccB), biotin carboxylase (AccC) and two subunits each of ACCase subunit alpha (AccA) and ACCase subunit beta (AccD). Zn(2+) is required as a cofactor.

It is found in the cytoplasm. The enzyme catalyses N(6)-carboxybiotinyl-L-lysyl-[protein] + acetyl-CoA = N(6)-biotinyl-L-lysyl-[protein] + malonyl-CoA. It participates in lipid metabolism; malonyl-CoA biosynthesis; malonyl-CoA from acetyl-CoA: step 1/1. Its function is as follows. Component of the acetyl coenzyme A carboxylase (ACC) complex. Biotin carboxylase (BC) catalyzes the carboxylation of biotin on its carrier protein (BCCP) and then the CO(2) group is transferred by the transcarboxylase to acetyl-CoA to form malonyl-CoA. This chain is Acetyl-coenzyme A carboxylase carboxyl transferase subunit beta, found in Pseudoalteromonas atlantica (strain T6c / ATCC BAA-1087).